Consider the following 391-residue polypeptide: Putative gustatory receptor 36b (391 aa).

Topologically, residues 1 to 4 (MVDW) are cytoplasmic. The chain crosses the membrane as a helical span at residues 5-25 (VVLLLKAVHIYCYLIGLSNFE). The Extracellular portion of the chain corresponds to 26 to 39 (FDCRTGRVFKSRRC). A helical transmembrane segment spans residues 40–60 (TIYAFMANIFILITIIYNFTA). The Cytoplasmic segment spans residues 61–74 (HGDTNLLFQSANKL). Residues 75–95 (HEYVIIIMSGLKIVAGLITVL) traverse the membrane as a helical segment. At 96–127 (NRWLQRGQMMQLVKDVIRLYMINPQLKSMIRW) the chain is on the extracellular side. The chain crosses the membrane as a helical span at residues 128–148 (GILLKAFISFAIELLQVTLSV). The Cytoplasmic segment spans residues 149-165 (DALDRQGTAEMMGLLVK). A helical transmembrane segment spans residues 166–186 (LCVSFIMNLAISQHFLVILLI). Residues 187–284 (RAQYRIMNAK…YKYGPHNLKL (98 aa)) lie on the Extracellular side of the membrane. A helical transmembrane segment spans residues 285–305 (SAKTSIIVCILITLFYLDALV). Residues 306–363 (NCNNMLRVLDHHKDFLGLLEERTVFASSLDIRLEESFESLQLQLARNPLKINVMGMFP) lie on the Cytoplasmic side of the membrane. A helical transmembrane segment spans residues 364 to 384 (ITRGSTAAMCASVIVNSIFLI). The Extracellular portion of the chain corresponds to 385-391 (QFDMEFF).

The protein belongs to the insect chemoreceptor superfamily. Gustatory receptor (GR) family. Gr22e subfamily. In terms of tissue distribution, expressed in neurons of the terminal external chemosensory organ of larvae.

The protein resides in the cell membrane. Functionally, probable gustatory receptor which mediates acceptance or avoidance behavior, depending on its substrates. In Drosophila melanogaster (Fruit fly), this protein is Putative gustatory receptor 36b (Gr36b).